We begin with the raw amino-acid sequence, 91 residues long: MLITKKDVEYTARKRIEKLYDFAIRTGDRRYIIEMEHIAQRMDITLPANIKRGYCKKCKTPYRNQVVRIKKNLVTVKCPVCDDIRRFQISR.

Zn(2+)-binding residues include Cys-55, Cys-58, Cys-78, and Cys-81.

Belongs to the eukaryotic/archaeal RNase P protein component 4 family. As to quaternary structure, consists of a catalytic RNA component and at least 4-5 protein subunits. Requires Zn(2+) as cofactor.

It localises to the cytoplasm. It carries out the reaction Endonucleolytic cleavage of RNA, removing 5'-extranucleotides from tRNA precursor.. Its function is as follows. Part of ribonuclease P, a protein complex that generates mature tRNA molecules by cleaving their 5'-ends. This chain is Ribonuclease P protein component 4, found in Thermoplasma acidophilum (strain ATCC 25905 / DSM 1728 / JCM 9062 / NBRC 15155 / AMRC-C165).